A 157-amino-acid polypeptide reads, in one-letter code: 6,7-dimethyl-8-ribityllumazine synthase (157 aa).

5-amino-6-(D-ribitylamino)uracil is bound by residues Phe23, 57-59, and 81-83; these read AFE and AVI. Position 86-87 (86-87) interacts with (2S)-2-hydroxy-3-oxobutyl phosphate; the sequence is ST. His89 acts as the Proton donor in catalysis. Phe114 serves as a coordination point for 5-amino-6-(D-ribitylamino)uracil. Arg128 lines the (2S)-2-hydroxy-3-oxobutyl phosphate pocket.

Belongs to the DMRL synthase family.

The enzyme catalyses (2S)-2-hydroxy-3-oxobutyl phosphate + 5-amino-6-(D-ribitylamino)uracil = 6,7-dimethyl-8-(1-D-ribityl)lumazine + phosphate + 2 H2O + H(+). It functions in the pathway cofactor biosynthesis; riboflavin biosynthesis; riboflavin from 2-hydroxy-3-oxobutyl phosphate and 5-amino-6-(D-ribitylamino)uracil: step 1/2. Catalyzes the formation of 6,7-dimethyl-8-ribityllumazine by condensation of 5-amino-6-(D-ribitylamino)uracil with 3,4-dihydroxy-2-butanone 4-phosphate. This is the penultimate step in the biosynthesis of riboflavin. The polypeptide is 6,7-dimethyl-8-ribityllumazine synthase (Desulfosudis oleivorans (strain DSM 6200 / JCM 39069 / Hxd3) (Desulfococcus oleovorans)).